We begin with the raw amino-acid sequence, 369 residues long: 4-hydroxy-3-methylbut-2-en-1-yl diphosphate synthase (flavodoxin) (369 aa).

4 residues coordinate [4Fe-4S] cluster: cysteine 270, cysteine 273, cysteine 305, and glutamate 312.

This sequence belongs to the IspG family. It depends on [4Fe-4S] cluster as a cofactor.

The catalysed reaction is (2E)-4-hydroxy-3-methylbut-2-enyl diphosphate + oxidized [flavodoxin] + H2O + 2 H(+) = 2-C-methyl-D-erythritol 2,4-cyclic diphosphate + reduced [flavodoxin]. The protein operates within isoprenoid biosynthesis; isopentenyl diphosphate biosynthesis via DXP pathway; isopentenyl diphosphate from 1-deoxy-D-xylulose 5-phosphate: step 5/6. Its function is as follows. Converts 2C-methyl-D-erythritol 2,4-cyclodiphosphate (ME-2,4cPP) into 1-hydroxy-2-methyl-2-(E)-butenyl 4-diphosphate. This Pseudomonas fluorescens (strain ATCC BAA-477 / NRRL B-23932 / Pf-5) protein is 4-hydroxy-3-methylbut-2-en-1-yl diphosphate synthase (flavodoxin).